Consider the following 508-residue polypeptide: Light-independent protochlorophyllide reductase subunit B (508 aa).

Position 36 (D36) interacts with [4Fe-4S] cluster. D282 acts as the Proton donor in catalysis. Substrate is bound at residue 417-418 (GL).

It belongs to the ChlB/BchB/BchZ family. As to quaternary structure, protochlorophyllide reductase is composed of three subunits; BchL, BchN and BchB. Forms a heterotetramer of two BchB and two BchN subunits. [4Fe-4S] cluster serves as cofactor.

It catalyses the reaction chlorophyllide a + oxidized 2[4Fe-4S]-[ferredoxin] + 2 ADP + 2 phosphate = protochlorophyllide a + reduced 2[4Fe-4S]-[ferredoxin] + 2 ATP + 2 H2O. It functions in the pathway porphyrin-containing compound metabolism; bacteriochlorophyll biosynthesis (light-independent). In terms of biological role, component of the dark-operative protochlorophyllide reductase (DPOR) that uses Mg-ATP and reduced ferredoxin to reduce ring D of protochlorophyllide (Pchlide) to form chlorophyllide a (Chlide). This reaction is light-independent. The NB-protein (BchN-BchB) is the catalytic component of the complex. This Methylocella silvestris (strain DSM 15510 / CIP 108128 / LMG 27833 / NCIMB 13906 / BL2) protein is Light-independent protochlorophyllide reductase subunit B.